Reading from the N-terminus, the 676-residue chain is MQSWRRRKSLWLALSASWLLLVLLGGFSLLRLALPPRPRPGASQGWPRWLDAELLQSFSQPGELPEDAVSPPQAPHGGSCNWESCFDTSKCRGDGLKVFVYPAVGTISETHRRILASIEGSRFYTFSPAGACLLLLLSLDAQTGECSSMPLQWNRGRNHLVLRLHPAPCPRTFQLGQAMVAEASPTVDSFRPGFDVALPFLPEAHPLRGGAPGQLRQHSPQPGVALLALEEERGGWRTADTGSSACPWDGRCEQDPGPGQTQRQETLPNATFCLISGHRPEAASRFLQALQAGCIPVLLSPRWELPFSEVIDWTKAAIVADERLPLQVLAALQEMSPARVLALRQQTQFLWDAYFSSVEKVIHTTLEVIQDRIFGTSAHPSLLWNSPPGALLALSTFSTSPQDFPFYYLQQGSRPEGRFSALIWVGPPGQPPLKLIQAVAGSQHCAQILVLWSNERPLPSRWPETAVPLTVIDGHRKVSDRFYPYSTIRTDAILSLDARSSLSTSEVDFAFLVWQSFPERMVGFLTSSHFWDEAHGGWGYTAERTNEFSMVLTTAAFYHRYYHTLFTHSLPKALRTLADEAPTCVDVLMNFIVAAVTKLPPIKVPYGKQRQEAAPLAPGGPGPRPKPPAPAPDCINQIAAAFGHMPLLSSRLRLDPVLFKDPVSVQRKKYRSLEKP.

Topologically, residues 1–9 (MQSWRRRKS) are cytoplasmic. The helical; Signal-anchor for type II membrane protein transmembrane segment at 10–30 (LWLALSASWLLLVLLGGFSLL) threads the bilayer. The Lumenal portion of the chain corresponds to 31–676 (RLALPPRPRP…RKKYRSLEKP (646 aa)). Positions 238–264 (TADTGSSACPWDGRCEQDPGPGQTQRQ) are disordered. Asn269 is a glycosylation site (N-linked (GlcNAc...) asparagine). Cys584 and Cys634 are joined by a disulfide. The tract at residues 610-631 (RQEAAPLAPGGPGPRPKPPAPA) is disordered. Positions 618–631 (PGGPGPRPKPPAPA) are enriched in pro residues.

Belongs to the glycosyltransferase 47 family.

It localises to the endoplasmic reticulum membrane. The catalysed reaction is 3-O-{[(1-&gt;4)-beta-D-GlcA-(1-&gt;4)-alpha-D-GlcNAc](n)-(1-&gt;4)-beta-D-GlcA-(1-&gt;3)-beta-D-Gal-(1-&gt;3)-beta-D-Gal-(1-&gt;4)-beta-D-Xyl}-L-seryl-[protein] + UDP-N-acetyl-alpha-D-glucosamine = 3-O-{alpha-D-GlcNAc-[(1-&gt;4)-beta-D-GlcA-(1-&gt;4)-alpha-D-GlcNAc](n)-(1-&gt;4)-beta-D-GlcA-(1-&gt;3)-beta-D-Gal-(1-&gt;3)-beta-D-Gal-(1-&gt;4)-beta-D-Xyl}-L-seryl-[protein] + UDP + H(+). It participates in protein modification; protein glycosylation. Functionally, glycosyltransferase required for the biosynthesis of heparan-sulfate (HS). Transfers N-acetyl-alpha-D-glucosamine to the nascent HS chain (GlcNAcT-II activity). Appears to lack GlcNAcT I and GlcAT-II activities. This chain is Exostosin-like 1 (EXTL1), found in Homo sapiens (Human).